A 45-amino-acid polypeptide reads, in one-letter code: Large ribosomal subunit protein bL34 (45 aa).

2 stretches are compositionally biased toward basic residues: residues 1 to 15 and 22 to 45; these read MKAK…RKRA and MKTK…IAIK. The disordered stretch occupies residues 1–45; that stretch reads MKAKSHLSNKKRKRASGFLARMKTKAGRKILARRRAKGRKRIAIK.

This sequence belongs to the bacterial ribosomal protein bL34 family.

In Sulfurihydrogenibium sp. (strain YO3AOP1), this protein is Large ribosomal subunit protein bL34.